A 1040-amino-acid chain; its full sequence is Multidrug resistance protein MdtB (1040 aa).

A run of 12 helical transmembrane segments spans residues 25–45 (LLMA…PVAA), 347–367 (LMLA…NIPA), 369–389 (IIPG…MVFL), 396–416 (LTLM…IVVI), 440–460 (IGFT…PLLF), 472–492 (FAVT…TLTP), 537–557 (WLTL…WIVI), 863–883 (LGST…VLGV), 888–908 (FIHP…ALLA), 910–930 (IIAG…LIGI), 968–988 (ILMT…STGV), and 998–1018 (IAMV…TPVI).

The protein belongs to the resistance-nodulation-cell division (RND) (TC 2.A.6) family. MdtB subfamily. As to quaternary structure, part of a tripartite efflux system composed of MdtA, MdtB and MdtC. MdtB forms a heteromultimer with MdtC.

The protein resides in the cell inner membrane. The sequence is that of Multidrug resistance protein MdtB from Salmonella paratyphi A (strain ATCC 9150 / SARB42).